A 149-amino-acid polypeptide reads, in one-letter code: UPF0178 protein Pmen_0294 (149 aa).

Belongs to the UPF0178 family.

The polypeptide is UPF0178 protein Pmen_0294 (Ectopseudomonas mendocina (strain ymp) (Pseudomonas mendocina)).